The following is a 328-amino-acid chain: Tetraacyldisaccharide 4'-kinase (328 aa).

55–62 is a binding site for ATP; sequence TAGGNGKT.

This sequence belongs to the LpxK family.

The catalysed reaction is a lipid A disaccharide + ATP = a lipid IVA + ADP + H(+). The protein operates within glycolipid biosynthesis; lipid IV(A) biosynthesis; lipid IV(A) from (3R)-3-hydroxytetradecanoyl-[acyl-carrier-protein] and UDP-N-acetyl-alpha-D-glucosamine: step 6/6. Transfers the gamma-phosphate of ATP to the 4'-position of a tetraacyldisaccharide 1-phosphate intermediate (termed DS-1-P) to form tetraacyldisaccharide 1,4'-bis-phosphate (lipid IVA). The sequence is that of Tetraacyldisaccharide 4'-kinase from Escherichia coli O17:K52:H18 (strain UMN026 / ExPEC).